We begin with the raw amino-acid sequence, 357 residues long: Olfactory receptor 2B2 (357 aa).

The Extracellular portion of the chain corresponds to 1-25 (MNWVNKSVPQEFILLVFSDQPWLEI). N-linked (GlcNAc...) asparagine glycosylation occurs at Asn5. The helical transmembrane segment at 26 to 49 (PPFVMFLFSYILTIFGNLTIILVS) threads the bilayer. The Cytoplasmic segment spans residues 50–57 (HVDFKLHT). A helical transmembrane segment spans residues 58–79 (PMYFFLSNLSLLDLCYTTSTVP). Topologically, residues 80–100 (QMLVNICNTRKVISYGGCVAQ) are extracellular. Cys97 and Cys189 are oxidised to a cystine. A helical transmembrane segment spans residues 101 to 120 (LFIFLALGSTECLLLAVMCF). Residues 121–139 (DRFVAICRPLHYSIIMHQR) lie on the Cytoplasmic side of the membrane. The chain crosses the membrane as a helical span at residues 140 to 158 (LCFQLAAASWISGFSNSVL). Over 159-195 (QSTWTLKMPLCGHKEVDHFFCEVPALLKLSCVDTTAN) the chain is Extracellular. The chain crosses the membrane as a helical span at residues 196-219 (EAELFFISVLFLLIPVTLILISYA). Residues 220–236 (FIVQAVLRIQSAEGQRK) are Cytoplasmic-facing. A helical membrane pass occupies residues 237 to 259 (AFGTCGSHLIVVSLFYGTAISMY). Topologically, residues 260–272 (LQPPSPSSKDRGK) are extracellular. A helical transmembrane segment spans residues 273 to 292 (MVSLFCGIIAPMLNPLIYTL). Residues 293 to 357 (RNKEVKEAFK…YCNLPQRKFP (65 aa)) are Cytoplasmic-facing.

The protein belongs to the G-protein coupled receptor 1 family.

The protein resides in the cell membrane. In terms of biological role, odorant receptor. In Homo sapiens (Human), this protein is Olfactory receptor 2B2 (OR2B2).